We begin with the raw amino-acid sequence, 73 residues long: Cell division protein ZapB (73 aa).

Residues 3–67 adopt a coiled-coil conformation; that stretch reads LELLSKLETK…WNDKVTGLVG (65 aa).

This sequence belongs to the ZapB family. As to quaternary structure, homodimer. The ends of the coiled-coil dimer bind to each other, forming polymers. Interacts with FtsZ.

The protein localises to the cytoplasm. Non-essential, abundant cell division factor that is required for proper Z-ring formation. It is recruited early to the divisome by direct interaction with FtsZ, stimulating Z-ring assembly and thereby promoting cell division earlier in the cell cycle. Its recruitment to the Z-ring requires functional FtsA or ZipA. The chain is Cell division protein ZapB from Shewanella sp. (strain MR-4).